The primary structure comprises 394 residues: Elongation factor Tu (394 aa).

The tr-type G domain occupies 10-204 (KPHVNVGTIG…FLDSYIPEPE (195 aa)). The segment at 19 to 26 (GHVDHGKT) is G1. 19–26 (GHVDHGKT) provides a ligand contact to GTP. Thr26 contributes to the Mg(2+) binding site. The segment at 60-64 (GITIN) is G2. A G3 region spans residues 81 to 84 (DCPG). Residues 81-85 (DCPGH) and 136-139 (NKCD) each bind GTP. The tract at residues 136–139 (NKCD) is G4. Positions 174–176 (SAL) are G5.

The protein belongs to the TRAFAC class translation factor GTPase superfamily. Classic translation factor GTPase family. EF-Tu/EF-1A subfamily. In terms of assembly, monomer.

Its subcellular location is the cytoplasm. The enzyme catalyses GTP + H2O = GDP + phosphate + H(+). GTP hydrolase that promotes the GTP-dependent binding of aminoacyl-tRNA to the A-site of ribosomes during protein biosynthesis. The polypeptide is Elongation factor Tu (Salmonella arizonae (strain ATCC BAA-731 / CDC346-86 / RSK2980)).